We begin with the raw amino-acid sequence, 136 residues long: MSLVFNLVKRLQLILLSLVVGGLAVAFLSNPAAAETYIVKMGSDKAQLVYDPPSLTINQGDTVQWVNNKVYPHNVVFDKVPGGDAALAAKLSHKALLTAPKQVVESAFVDVPPGEYTYYCTPHRGAGMVGKIIVNG.

A signal peptide spans 1–34 (MSLVFNLVKRLQLILLSLVVGGLAVAFLSNPAAA). The Plastocyanin-like domain maps to 35 to 136 (ETYIVKMGSD…GMVGKIIVNG (102 aa)). Positions 73, 120, 123, and 128 each coordinate Cu cation.

Belongs to the plastocyanin family. Requires Cu(2+) as cofactor.

It is found in the cellular thylakoid membrane. Functionally, participates in electron transfer between P700 and the cytochrome b6-f complex in photosystem I. This Synechococcus sp. (strain JA-2-3B'a(2-13)) (Cyanobacteria bacterium Yellowstone B-Prime) protein is Plastocyanin.